The following is a 508-amino-acid chain: D-alanine--D-alanyl carrier protein ligase (508 aa).

Position 152–153 (152–153 (TS)) interacts with ATP. D-alanine is bound at residue D198. 293 to 298 (NTYGPT) contacts ATP. V302 is a D-alanine binding site. Residues D384, 396–399 (YRGR), and K495 contribute to the ATP site. Position 495 (K495) interacts with D-alanine.

This sequence belongs to the ATP-dependent AMP-binding enzyme family. DltA subfamily.

It localises to the cytoplasm. The enzyme catalyses holo-[D-alanyl-carrier protein] + D-alanine + ATP = D-alanyl-[D-alanyl-carrier protein] + AMP + diphosphate. The protein operates within cell wall biogenesis; lipoteichoic acid biosynthesis. Functionally, catalyzes the first step in the D-alanylation of lipoteichoic acid (LTA), the activation of D-alanine and its transfer onto the D-alanyl carrier protein (Dcp) DltC. In an ATP-dependent two-step reaction, forms a high energy D-alanyl-AMP intermediate, followed by transfer of the D-alanyl residue as a thiol ester to the phosphopantheinyl prosthetic group of the Dcp. D-alanylation of LTA plays an important role in modulating the properties of the cell wall in Gram-positive bacteria, influencing the net charge of the cell wall. This Lactiplantibacillus plantarum (strain ATCC BAA-793 / NCIMB 8826 / WCFS1) (Lactobacillus plantarum) protein is D-alanine--D-alanyl carrier protein ligase.